The primary structure comprises 608 residues: Threonine--tRNA ligase (608 aa).

The segment at Met-1–Glu-143 is editing domain. Catalytic regions lie at residues Pro-194–Pro-490 and Lys-195–Pro-490. Cys-287, His-338, and His-459 together coordinate Zn(2+).

The protein belongs to the class-II aminoacyl-tRNA synthetase family. Homodimer. It depends on Zn(2+) as a cofactor.

It localises to the cytoplasm. The catalysed reaction is tRNA(Thr) + L-threonine + ATP = L-threonyl-tRNA(Thr) + AMP + diphosphate + H(+). Its function is as follows. Catalyzes the attachment of threonine to tRNA(Thr) in a two-step reaction: L-threonine is first activated by ATP to form Thr-AMP and then transferred to the acceptor end of tRNA(Thr). Also edits incorrectly charged L-seryl-tRNA(Thr). The protein is Threonine--tRNA ligase of Pyrobaculum arsenaticum (strain DSM 13514 / JCM 11321 / PZ6).